Reading from the N-terminus, the 394-residue chain is Phosphoglycerate kinase (394 aa).

Residues 21–23, Arg-37, 60–63, Arg-119, and Arg-152 each bind substrate; these read DFN and HLGR. ATP is bound by residues Lys-202, Glu-324, and 350–353; that span reads GGDS.

This sequence belongs to the phosphoglycerate kinase family. In terms of assembly, monomer.

Its subcellular location is the cytoplasm. The catalysed reaction is (2R)-3-phosphoglycerate + ATP = (2R)-3-phospho-glyceroyl phosphate + ADP. Its pathway is carbohydrate degradation; glycolysis; pyruvate from D-glyceraldehyde 3-phosphate: step 2/5. In Herpetosiphon aurantiacus (strain ATCC 23779 / DSM 785 / 114-95), this protein is Phosphoglycerate kinase.